The following is a 198-amino-acid chain: Syndecan-4 (198 aa).

A signal peptide spans 1–18 (MAPARLFALLLLFVGGVA). At 19–145 (ESIRETEVID…QGSNIFERTE (127 aa)) the chain is on the extracellular side. 3 O-linked (Xyl...) (glycosaminoglycan) serine glycosylation sites follow: serine 39, serine 61, and serine 63. Residue serine 95 is glycosylated (O-linked (Xyl...) (chondroitin sulfate) serine). Residues 146-170 (VLAALIVGGIVGILFAVFLILLLMY) traverse the membrane as a helical segment. Over 171-198 (RMKKKDEGSYDLGKKPIYKKAPTNEFYA) the chain is Cytoplasmic.

This sequence belongs to the syndecan proteoglycan family. As to quaternary structure, homodimer. Interacts with CDCP1 and SDCBP. Interacts (via its cytoplasmic domain) with GIPC (via its PDZ domain). Interacts (via its cytoplasmic domain) with NUDT16L1. Interacts with DNM2; this interaction is markedly enhanced at focal ahesion site upon induction of focal adhesions and stress-fiber formation. In terms of processing, shedding is enhanced by a number of factors such as heparanase, thrombin or EGF. Also by stress and wound healing. PMA-mediated shedding is inhibited by TIMP3. Post-translationally, O-glycosylated; contains both chondroitin sulfate and heparan sulfate. Ser-39, Ser-61 and Ser-63 can all be modified by either chondroitin sulfate or heparan sulfate, and the protein exists in forms that contain only chondroitin sulfate, only heparan sulfate and both chondroitin sulfate and heparan sulfate.

The protein localises to the membrane. It is found in the secreted. Cell surface proteoglycan which regulates exosome biogenesis in concert with SDCBP and PDCD6IP. This is Syndecan-4 from Pongo abelii (Sumatran orangutan).